We begin with the raw amino-acid sequence, 465 residues long: Clusterin-like protein 1 (465 aa).

A signal peptide spans 1–20; it reads MKPSLLVFTVYLLWLKDCHC. A coiled-coil region spans residues 62 to 106; the sequence is MMERREEEHTNLMKTLKKCKEEKQEALKLMNEVQEHLEEEESLCQ. Disulfide bonds link Cys105–Cys333, Cys116–Cys325, Cys119–Cys322, and Cys124–Cys315. 7 N-linked (GlcNAc...) asparagine glycosylation sites follow: Asn196, Asn257, Asn285, Asn311, Asn351, Asn412, and Asn430.

This sequence belongs to the clusterin family. In terms of tissue distribution, retina-specific (at protein level). In the light-adapted retina, expressed in the outer segment of cone photoreceptors. In the dark-adapted retina, strongly expressed in the outer plexiform layer in the region of contact between the cone pedicles and second order neurons with little or no expression in the cone photoreceptor outer segments.

The protein resides in the secreted. This is Clusterin-like protein 1 (CLUL1) from Canis lupus familiaris (Dog).